We begin with the raw amino-acid sequence, 175 residues long: MDSEFFQPVYPRHYGECLSPTSTPSFFSTHMCTILVAIVVLIIIIIVLIYLFSSRKKKAAAPAIEEEDIQFINPYQDQQWAGATPQPGTSKPAGATTGNVGKPITDRPATDRPVTNNPVTDRLIMATGGPAAASAPSAELYTTATTQNTASQTMPAVEALRQRSTYTHKDLENSL.

A helical membrane pass occupies residues 32 to 52; it reads CTILVAIVVLIIIIIVLIYLF. Residues 79-89 show a composition bias toward polar residues; it reads QWAGATPQPGT. The tract at residues 79–121 is disordered; that stretch reads QWAGATPQPGTSKPAGATTGNVGKPITDRPATDRPVTNNPVTD. The interaction with host DYNLL1 stretch occupies residues 141–153; sequence YTTATTQNTASQT.

The protein belongs to the asfivirus envelope protein p54 family. As to quaternary structure, interacts with the host light chain cytoplasmic dynein DYNLL1; this interaction is critical for intracellular microtubule-dependent virus transport toward viral factories.

Its subcellular location is the virion membrane. It localises to the host cytoplasm. The protein resides in the host cytoskeleton. The protein localises to the host endoplasmic reticulum membrane. Its function is as follows. Inner envelope protein involved, through its interaction with host dynein, in the intracellular microtubule-dependent transport of viral capsid toward viral factories. Seems to induce caspase-3 activation and apoptosis. Plays a role in virion morphogenesis by recruiting and transforming the host ER membranes into the precursors of the viral envelope. Involved in virus attachment to the host cell. This is Inner membrane protein p54 from African swine fever virus (isolate Pig/Kenya/KEN-50/1950) (ASFV).